Reading from the N-terminus, the 868-residue chain is Sporulation-specific protein 75 (868 aa).

The Extracellular portion of the chain corresponds to 1–34 (MNATKELTFNLLNKFQDKERFGSAQRHAGISLKG). N2 carries an N-linked (GlcNAc...) asparagine glycan. Residues 35–55 (FISGILFSFLYFLFQLSLFII) form a helical membrane-spanning segment. Residues 56-127 (LRSRFKTIYQ…DNYLFLRFLK (72 aa)) are Cytoplasmic-facing. Residues 128 to 148 (LLIFFFAVLSIINIPILIPIH) form a helical membrane-spanning segment. Residues 149 to 187 (YFSRDILKENEGERYEQSFRTTSKLDKWTMSNLSPNSSN) are Extracellular-facing. N184 is a glycosylation site (N-linked (GlcNAc...) asparagine). Residues 188 to 208 (TLICHLFLSIFVVLWFHFILS) form a helical membrane-spanning segment. The Cytoplasmic segment spans residues 209-481 (SELRFVNRLG…AKYFSANILR (273 aa)). A helical transmembrane segment spans residues 482 to 502 (IFVIIGWILPVAFLGLISQIP). N-linked (GlcNAc...) asparagine glycosylation occurs at N503. Residues 503 to 527 (NISSLIPFTKIIHFQSPFIREVAKN) lie on the Extracellular side of the membrane. A helical transmembrane segment spans residues 528 to 548 (LIPIVTLIIIIEIVPYFFRWL). Over 549 to 569 (SYLRGLKTGAQIEADVQNWYF) the chain is Cytoplasmic. Residues 570–590 (VFVFIHLFVVVTISSGFSIII) traverse the membrane as a helical segment. The Extracellular segment spans residues 591 to 611 (ERLLNNPVSIPALLANDLPKC). A helical membrane pass occupies residues 612 to 632 (ANFFCSFVLIRGMAYAGGNLL). Residues 633–660 (RIKELLFELFYYKWKRSTPHAQFKRLKT) lie on the Cytoplasmic side of the membrane. Residues 661–683 (SLFFQLGSIYPIFSVLGCIGIIY) form a helical membrane-spanning segment. Residues 684–692 (SVVAPIILL) lie on the Extracellular side of the membrane. Residues 693–713 (LCCISFSMVFFSFSYLFKYQY) form a helical membrane-spanning segment. Residues 714-730 (NKENYSETFGKLYIQAL) lie on the Cytoplasmic side of the membrane. A helical transmembrane segment spans residues 731-751 (MQLYAGIYFMEFCLLGLFTLF). At 752-753 (DQ) the chain is on the extracellular side. A helical membrane pass occupies residues 754-774 (YTLSTIMLVVFALTVITHSKI). Residues 775-868 (SKQIKSKPQR…DCHLENSHLH (94 aa)) lie on the Cytoplasmic side of the membrane.

The protein belongs to the CSC1 (TC 1.A.17) family.

Its subcellular location is the membrane. Functionally, acts as an osmosensitive calcium-permeable cation channel. Required for spore wall assembly and ascus formation. The protein is Sporulation-specific protein 75 (SPO75) of Saccharomyces cerevisiae (strain ATCC 204508 / S288c) (Baker's yeast).